A 174-amino-acid polypeptide reads, in one-letter code: ATP synthase subunit delta (174 aa).

This sequence belongs to the ATPase delta chain family. In terms of assembly, F-type ATPases have 2 components, F(1) - the catalytic core - and F(0) - the membrane proton channel. F(1) has five subunits: alpha(3), beta(3), gamma(1), delta(1), epsilon(1). F(0) has three main subunits: a(1), b(2) and c(10-14). The alpha and beta chains form an alternating ring which encloses part of the gamma chain. F(1) is attached to F(0) by a central stalk formed by the gamma and epsilon chains, while a peripheral stalk is formed by the delta and b chains.

The protein resides in the cell inner membrane. Functionally, f(1)F(0) ATP synthase produces ATP from ADP in the presence of a proton or sodium gradient. F-type ATPases consist of two structural domains, F(1) containing the extramembraneous catalytic core and F(0) containing the membrane proton channel, linked together by a central stalk and a peripheral stalk. During catalysis, ATP synthesis in the catalytic domain of F(1) is coupled via a rotary mechanism of the central stalk subunits to proton translocation. In terms of biological role, this protein is part of the stalk that links CF(0) to CF(1). It either transmits conformational changes from CF(0) to CF(1) or is implicated in proton conduction. This chain is ATP synthase subunit delta, found in Francisella tularensis subsp. tularensis (strain FSC 198).